The following is a 381-amino-acid chain: Pentraxin-related protein PTX3 (381 aa).

Residues 1-17 form the signal peptide; the sequence is MHLLAILFCALWSAVLA. 2 coiled-coil regions span residues 74-101 and 143-167; these read LQAT…SLAR and EEAG…HAVQ. 2 cysteine pairs are disulfide-bonded: cysteine 179–cysteine 357 and cysteine 210–cysteine 271. A Pentraxin (PTX) domain is found at 179–381; that stretch reads CETAILFPMR…QPHGGAQYVS (203 aa). Asparagine 220 carries an N-linked (GlcNAc...) asparagine glycan.

As to quaternary structure, homooctamer; disulfide-linked. Binds to C1q. In terms of assembly, (Microbial infection) Interacts with SARS coronavirus-2/SARS-CoV-2 Nucleoprotein and Spike protein homotrimer. In terms of processing, glycosylated.

The protein resides in the secreted. Plays a role in the regulation of innate resistance to pathogens, inflammatory reactions, possibly clearance of self-components and female fertility. This is Pentraxin-related protein PTX3 from Homo sapiens (Human).